A 218-amino-acid chain; its full sequence is NADH-ubiquinone oxidoreductase 21 kDa subunit, mitochondrial (218 aa).

A mitochondrion-targeting transit peptide spans 1–33 (MSALRITTASAARMLRTSNAMMPSVMGAAQRRA). Positions 31–74 (RRALSDSAEPARVPSVESARVPEKLAKEDSPLATPKRNSPDYNV) are disordered. The span at 50 to 60 (RVPEKLAKEDS) shows a compositional bias: basic and acidic residues.

It belongs to the complex I NDUFS4 subunit family. In terms of assembly, complex I is composed of about 40 different subunits. This is a component of the iron-sulfur (IP) fragment of the enzyme.

It is found in the mitochondrion inner membrane. Accessory subunit of the mitochondrial membrane respiratory chain NADH dehydrogenase (Complex I), that is believed not to be involved in catalysis. Complex I functions in the transfer of electrons from NADH to the respiratory chain. The immediate electron acceptor for the enzyme is believed to be ubiquinone. This chain is NADH-ubiquinone oxidoreductase 21 kDa subunit, mitochondrial (nuo-21), found in Neurospora crassa (strain ATCC 24698 / 74-OR23-1A / CBS 708.71 / DSM 1257 / FGSC 987).